The following is a 126-amino-acid chain: UPF0102 protein Cphamn1_0017 (126 aa).

This sequence belongs to the UPF0102 family.

The sequence is that of UPF0102 protein Cphamn1_0017 from Chlorobium phaeobacteroides (strain BS1).